The chain runs to 310 residues: Junctional adhesion molecule C (310 aa).

Residues 1–29 (MALSRRLRLRLYARLPDFFLLLLFRGCMI) form the signal peptide. Residues 30 to 241 (EAVNLKSSNR…GQDMEVYDLN (212 aa)) are Extracellular-facing. The Ig-like V-type domain occupies 35–127 (KSSNRNPVVH…VALNDRKEVD (93 aa)). 2 disulfide bridges follow: Cys53–Cys115 and Cys160–Cys219. N-linked (GlcNAc...) asparagine glycans are attached at residues Asn104 and Asn192. One can recognise an Ig-like C2-type domain in the interval 139-236 (PVTPVCRIPA…AARCEGQDME (98 aa)). A helical transmembrane segment spans residues 242–262 (IAGIIGGVLVVLIVLAVITMG). Topologically, residues 263–310 (ICCAYRRGCFISSKQDGESYKSPGKHDGVNYIRTSEEGDFRHKSSFVI) are cytoplasmic. S-palmitoyl cysteine attachment occurs at residues Cys264 and Cys265.

The protein belongs to the immunoglobulin superfamily. Interacts with ITGAM. Interacts with GORASP2. In terms of processing, proteolytically cleaved from endothelial cells surface into a soluble form by ADAM10 and ADAM17; the release of soluble JAM3 is increased by pro-inflammatory factors. Post-translationally, N-glycosylated. S-palmitoylated by ZDHHC7. S-palmitoylation promotes expression at tight junctions. Colocalizes with Jam2 near the lumen of seminiferous tubulues. Detected at junctional plaques that correspond to cell-cell contacts between spermatids and Sertoli cells. Detected on endothelial cells, in brain vessels and kidney glomeruli (at protein level). Detected in heart, lung, liver, kidney, testis, thymus, lymph node and Peyer patch. Endothelial cells.

The protein localises to the cell membrane. It is found in the cell junction. Its subcellular location is the desmosome. The protein resides in the tight junction. It localises to the secreted. In terms of biological role, junctional adhesion protein that mediates heterotypic cell-cell interactions with its cognate receptor JAM2 to regulate different cellular processes. Plays a role in homing and mobilization of hematopoietic stem and progenitor cells within the bone marrow. At the surface of bone marrow stromal cells, it contributes to the retention of the hematopoietic stem and progenitor cells expressing JAM3. Plays a central role in leukocytes extravasation by facilitating transmigration through the endothelium. Plays a role in spermatogenesis where JAM2 and JAM3, which are respectively expressed by Sertoli and germ cells, mediate an interaction between both cell types and play an essential role in the anchorage of germ cells onto Sertoli cells and the assembly of cell polarity complexes during spermatid differentiation. Also functions as a counter-receptor for ITGAM, mediating leukocyte-platelet interactions and is involved in the regulation of transepithelial migration of polymorphonuclear neutrophils (PMN). Plays a role in angiogenesis. Plays a role in the regulation of cell migration. During myogenesis, it is involved in myocyte fusion. Its function is as follows. Promotes chemotaxis of vascular endothelial cells and stimulates angiogenesis. In Mus musculus (Mouse), this protein is Junctional adhesion molecule C (Jam3).